The following is a 174-amino-acid chain: Photosystem II repair protein PSB27-H1, chloroplastic (174 aa).

Positions 1–35 (MASASATATLLKPNLPPHKPTIIASSVSPPLPPPR) are disordered. Residue Thr94 is modified to Phosphothreonine. Tyr132 bears the Phosphotyrosine mark.

The protein belongs to the Psb27 family.

The protein localises to the plastid. It localises to the chloroplast thylakoid membrane. Probably involved in repair of photodamaged photosystem II (PSII). The sequence is that of Photosystem II repair protein PSB27-H1, chloroplastic (PSB27-1) from Arabidopsis thaliana (Mouse-ear cress).